Consider the following 340-residue polypeptide: rRNA adenine N-6-methyltransferase (340 aa).

Residues 1–25 (MAGPQDRPRGRGPSSGRPQRPVGGR) are compositionally biased toward low complexity. The interval 1 to 37 (MAGPQDRPRGRGPSSGRPQRPVGGRSQRDRDRRVLGQ) is disordered. 6 residues coordinate S-adenosyl-L-methionine: asparagine 38, leucine 40, glycine 65, glutamate 86, aspartate 111, and alanine 127. Positions 284–340 (RGGAARGPGDQRGRRGRPGGGPRPDGRAGGGPRRDAGGRRTGDGRGGRPRPPRGGQA) are disordered. The segment covering 301 to 314 (PGGGPRPDGRAGGG) has biased composition (gly residues). The segment covering 315-329 (PRRDAGGRRTGDGRG) has biased composition (basic and acidic residues).

Belongs to the class I-like SAM-binding methyltransferase superfamily. rRNA adenine N(6)-methyltransferase family.

In terms of biological role, involved in erythromycin resistance. The polypeptide is rRNA adenine N-6-methyltransferase (ermA) (Aeromicrobium erythreum (strain ATCC 51598 / DSM 8599 / JCM 8359 / NBRC 15406 / NRRL B-3381)).